The primary structure comprises 430 residues: Adenylosuccinate synthetase (430 aa).

Residues glycine 12–lysine 18 and glycine 40–threonine 42 each bind GTP. Aspartate 13 serves as the catalytic Proton acceptor. Mg(2+)-binding residues include aspartate 13 and glycine 40. Residues aspartate 13–lysine 16, asparagine 38–histidine 41, threonine 128, arginine 142, glutamine 223, threonine 238, and arginine 302 contribute to the IMP site. The Proton donor role is filled by histidine 41. Threonine 298–arginine 304 is a binding site for substrate. Residues arginine 304, serine 330 to aspartate 332, and serine 412 to glycine 414 contribute to the GTP site.

It belongs to the adenylosuccinate synthetase family. As to quaternary structure, homodimer. Requires Mg(2+) as cofactor.

It is found in the cytoplasm. The catalysed reaction is IMP + L-aspartate + GTP = N(6)-(1,2-dicarboxyethyl)-AMP + GDP + phosphate + 2 H(+). The protein operates within purine metabolism; AMP biosynthesis via de novo pathway; AMP from IMP: step 1/2. In terms of biological role, plays an important role in the de novo pathway of purine nucleotide biosynthesis. Catalyzes the first committed step in the biosynthesis of AMP from IMP. The chain is Adenylosuccinate synthetase from Streptococcus equi subsp. equi (strain 4047).